The following is a 283-amino-acid chain: Pantothenate synthetase (283 aa).

30-37 (MGYLHEGH) is an ATP binding site. Histidine 37 (proton donor) is an active-site residue. Position 61 (glutamine 61) interacts with (R)-pantoate. Glutamine 61 contacts beta-alanine. ATP is bound at residue 147–150 (GRKD). Residue glutamine 153 coordinates (R)-pantoate. Residues valine 176 and 184-187 (MSSR) each bind ATP.

It belongs to the pantothenate synthetase family. As to quaternary structure, homodimer.

It localises to the cytoplasm. It carries out the reaction (R)-pantoate + beta-alanine + ATP = (R)-pantothenate + AMP + diphosphate + H(+). It functions in the pathway cofactor biosynthesis; (R)-pantothenate biosynthesis; (R)-pantothenate from (R)-pantoate and beta-alanine: step 1/1. In terms of biological role, catalyzes the condensation of pantoate with beta-alanine in an ATP-dependent reaction via a pantoyl-adenylate intermediate. The protein is Pantothenate synthetase of Syntrophotalea carbinolica (strain DSM 2380 / NBRC 103641 / GraBd1) (Pelobacter carbinolicus).